Consider the following 74-residue polypeptide: MPDNVDFIQEQQAELLERQINAARVKHCGASALVCEECDAPIPAARRAAYPSATRCVSCQSVFEAKNKHYRRTA.

The dksA C4-type zinc-finger motif lies at 35-59 (CEECDAPIPAARRAAYPSATRCVSC).

This is an uncharacterized protein from Enterobacteriaceae (Bacteriophage P2).